A 181-amino-acid polypeptide reads, in one-letter code: ATP-dependent protease subunit HslV (181 aa).

Thr-5 is a catalytic residue. Na(+) contacts are provided by Ala-161, Cys-164, and Thr-167.

This sequence belongs to the peptidase T1B family. HslV subfamily. A double ring-shaped homohexamer of HslV is capped on each side by a ring-shaped HslU homohexamer. The assembly of the HslU/HslV complex is dependent on binding of ATP.

The protein localises to the cytoplasm. The catalysed reaction is ATP-dependent cleavage of peptide bonds with broad specificity.. Its activity is regulated as follows. Allosterically activated by HslU binding. Functionally, protease subunit of a proteasome-like degradation complex believed to be a general protein degrading machinery. This is ATP-dependent protease subunit HslV from Sulfurimonas denitrificans (strain ATCC 33889 / DSM 1251) (Thiomicrospira denitrificans (strain ATCC 33889 / DSM 1251)).